Consider the following 1829-residue polypeptide: Unconventional myosin-Va (1829 aa).

Residues Thr8–Pro60 form the Myosin N-terminal SH3-like domain. The Myosin motor domain occupies Val69 to Ala764. Residue Gly163–Thr170 participates in ATP binding. Residues Ala599–Thr635 form a disordered region. The interval Leu644–Asp666 is actin-binding. IQ domains lie at Leu767 to Arg789, Met790 to Arg814, Arg815 to Cys837, Met838 to Leu862, Arg863 to Leu887, and Lys888 to Ser915. 2 coiled-coil regions span residues Val916–Thr1239 and Gly1315–Val1419. 2 disordered regions span residues Ile1106 to Lys1148 and Lys1170 to Gly1199. The span at Thr1117–Ile1131 shows a compositional bias: polar residues. Composition is skewed to basic and acidic residues over residues Leu1137–Lys1148 and Lys1170–Pro1196. Positions Thr1508–Asp1784 constitute a Dilute domain. Phosphothreonine is present on Thr1734.

It belongs to the TRAFAC class myosin-kinesin ATPase superfamily. Myosin family. May be a homodimer, which associates with multiple calmodulin or myosin light chains. Neuronal and non-neuronal cells of the brain.

It is found in the golgi apparatus membrane. The enzyme catalyses ATP + H2O = ADP + phosphate + H(+). Functionally, processive actin-based motor that can move in large steps approximating the 36-nm pseudo-repeat of the actin filament. Can hydrolyze ATP in the presence of actin, which is essential for its function as a motor protein. Involved in melanosome transport. Also mediates the transport of vesicles to the plasma membrane. May also be required for some polarization process involved in dendrite formation. The chain is Unconventional myosin-Va (MYO5A) from Gallus gallus (Chicken).